We begin with the raw amino-acid sequence, 191 residues long: Fe/S biogenesis protein NfuA (191 aa).

Residues Cys149 and Cys152 each coordinate [4Fe-4S] cluster.

This sequence belongs to the NfuA family. Homodimer. [4Fe-4S] cluster is required as a cofactor.

In terms of biological role, involved in iron-sulfur cluster biogenesis. Binds a 4Fe-4S cluster, can transfer this cluster to apoproteins, and thereby intervenes in the maturation of Fe/S proteins. Could also act as a scaffold/chaperone for damaged Fe/S proteins. The protein is Fe/S biogenesis protein NfuA of Pectobacterium carotovorum subsp. carotovorum (strain PC1).